The sequence spans 502 residues: Intracellular exo-alpha-(1-&gt;5)-L-arabinofuranosidase (502 aa).

Positions 29, 74, and 174 each coordinate alpha-L-arabinofuranose. E175 acts as the Proton donor/acceptor in catalysis. Alpha-L-arabinofuranose is bound by residues Y246, E294, and Q351. Catalysis depends on E294, which acts as the Nucleophile.

Belongs to the glycosyl hydrolase 51 family. As to quaternary structure, homohexamer; trimer of dimers.

The protein resides in the cytoplasm. It catalyses the reaction Hydrolysis of terminal non-reducing alpha-L-arabinofuranoside residues in alpha-L-arabinosides.. The protein operates within glycan metabolism; L-arabinan degradation. Strongly inhibited by Hg(2+). Its function is as follows. Involved in the degradation of arabinan and is a key enzyme in the complete degradation of the plant cell wall. Catalyzes the cleavage of terminal alpha-(1-&gt;5)-arabinofuranosyl bonds in different hemicellulosic homopolysaccharides (branched and debranched arabinans). It acts preferentially on aryl-alpha-L-arabinofuranosides, and is much less effective on aryl-beta-D-xylopyranosides. The chain is Intracellular exo-alpha-(1-&gt;5)-L-arabinofuranosidase (abfA) from Geobacillus stearothermophilus (Bacillus stearothermophilus).